A 175-amino-acid polypeptide reads, in one-letter code: Large ribosomal subunit protein uL16 (175 aa).

This sequence belongs to the universal ribosomal protein uL16 family.

The polypeptide is Large ribosomal subunit protein uL16 (Caldivirga maquilingensis (strain ATCC 700844 / DSM 13496 / JCM 10307 / IC-167)).